Here is a 40-residue protein sequence, read N- to C-terminus: AAKDIKFGVEARGLMLQGVEQLADAVKVTMGPKGRNVVIE.

Belongs to the chaperonin (HSP60) family.

It is found in the mitochondrion. Implicated in mitochondrial protein import and macromolecular assembly. May facilitate the correct folding of imported proteins. May also prevent misfolding and promote the refolding and proper assembly of unfolded polypeptides generated under stress conditions in the mitochondrial matrix. The protein is Chaperonin HSP60, mitochondrial of Solanum tuberosum (Potato).